The sequence spans 85 residues: Progonadoliberin-2 (85 aa).

Positions 1–23 (MCASRLVLLLGLLLCVGAHLSSG) are cleaved as a signal peptide. The residue at position 24 (Q24) is a Pyrrolidone carboxylic acid. G33 carries the glycine amide modification.

It belongs to the GnRH family. Midbrain tegmentum.

Its subcellular location is the secreted. In terms of biological role, stimulates the secretion of gonadotropins. This chain is Progonadoliberin-2 (gnrh2), found in Verasper moseri (Barfin flounder).